Reading from the N-terminus, the 632-residue chain is Eukaryotic peptide chain release factor GTP-binding subunit ERF3B (632 aa).

Disordered stretches follow at residues 1-31 (MDLG…GDGI) and 162-200 (SEAK…SIPS). A compositionally biased stretch (basic and acidic residues) spans 178 to 192 (ESVKEVMEEKEEVRK). The region spanning 205-429 (KEHVNVVFIG…YLDSLPNFNR (225 aa)) is the tr-type G domain. The G1 stretch occupies residues 214 to 221 (GHVDAGKS). GTP is bound at residue 217-222 (DAGKST). Residues 270–274 (GKTVE) form a G2 region. The interval 291–294 (DAPG) is G3. GTP is bound by residues 353–356 (NKMD) and 395–397 (SGL). Residues 353 to 356 (NKMD) form a G4 region. Residues 395-397 (SGL) are G5.

Belongs to the TRAFAC class translation factor GTPase superfamily. Classic translation factor GTPase family. ERF3 subfamily. Component of the eRF1-eRF3-GTP ternary complex, composed of ETF1/ERF1 and ERF3 (GSPT1/ERF3A or GSPT2/ERF3B) and GTP. Component of the transient SURF (SMG1-UPF1-eRF1-eRF3) complex. Interacts with UPF1 and PABPC1. Highly expressed in brain. Moderately expressed in spleen and lung. Weakly expressed in heart, liver and kidney. Expression during the cell-cycle progression is constant.

The protein localises to the cytoplasm. It catalyses the reaction GTP + H2O = GDP + phosphate + H(+). Its function is as follows. GTPase component of the eRF1-eRF3-GTP ternary complex, a ternary complex that mediates translation termination in response to the termination codons UAA, UAG and UGA. GSPT2/ERF3B mediates ETF1/ERF1 delivery to stop codons: The eRF1-eRF3-GTP complex binds to a stop codon in the ribosomal A-site. GTP hydrolysis by GSPT2/ERF3B induces a conformational change that leads to its dissociation, permitting ETF1/ERF1 to accommodate fully in the A-site. Component of the transient SURF complex which recruits UPF1 to stalled ribosomes in the context of nonsense-mediated decay (NMD) of mRNAs containing premature stop codons. This Mus musculus (Mouse) protein is Eukaryotic peptide chain release factor GTP-binding subunit ERF3B (Gspt2).